A 248-amino-acid polypeptide reads, in one-letter code: Pyridoxine 5'-phosphate synthase (248 aa).

A 3-amino-2-oxopropyl phosphate-binding site is contributed by Asn-12. A 1-deoxy-D-xylulose 5-phosphate-binding site is contributed by 14–15 (DH). Residue Arg-23 participates in 3-amino-2-oxopropyl phosphate binding. His-48 acts as the Proton acceptor in catalysis. Positions 50 and 55 each coordinate 1-deoxy-D-xylulose 5-phosphate. Residue Glu-75 is the Proton acceptor of the active site. Thr-105 contacts 1-deoxy-D-xylulose 5-phosphate. His-196 (proton donor) is an active-site residue. Residues Gly-197 and 218 to 219 (GH) each bind 3-amino-2-oxopropyl phosphate.

Belongs to the PNP synthase family. Homooctamer; tetramer of dimers.

It localises to the cytoplasm. The enzyme catalyses 3-amino-2-oxopropyl phosphate + 1-deoxy-D-xylulose 5-phosphate = pyridoxine 5'-phosphate + phosphate + 2 H2O + H(+). The protein operates within cofactor biosynthesis; pyridoxine 5'-phosphate biosynthesis; pyridoxine 5'-phosphate from D-erythrose 4-phosphate: step 5/5. Its function is as follows. Catalyzes the complicated ring closure reaction between the two acyclic compounds 1-deoxy-D-xylulose-5-phosphate (DXP) and 3-amino-2-oxopropyl phosphate (1-amino-acetone-3-phosphate or AAP) to form pyridoxine 5'-phosphate (PNP) and inorganic phosphate. In Pseudomonas fluorescens (strain ATCC BAA-477 / NRRL B-23932 / Pf-5), this protein is Pyridoxine 5'-phosphate synthase.